Here is a 164-residue protein sequence, read N- to C-terminus: Cytochrome c-type biogenesis protein CcmE (164 aa).

The Cytoplasmic segment spans residues 1–8 (MNPRRKSR). Residues 9–29 (LYLAVVVLIGIGLTTTLVLYA) traverse the membrane as a helical; Signal-anchor for type II membrane protein segment. The Periplasmic portion of the chain corresponds to 30-164 (LRSNIDLFYT…NSTAAQGNAS (135 aa)). Residues H130 and Y134 each coordinate heme. Residues 131–150 (DEKYTPPEVKEAMKENHTRP) show a composition bias toward basic and acidic residues. Positions 131 to 164 (DEKYTPPEVKEAMKENHTRPAEAYNSTAAQGNAS) are disordered. Residues 154-164 (YNSTAAQGNAS) are compositionally biased toward polar residues.

Belongs to the CcmE/CycJ family.

The protein resides in the cell inner membrane. Its function is as follows. Heme chaperone required for the biogenesis of c-type cytochromes. Transiently binds heme delivered by CcmC and transfers the heme to apo-cytochromes in a process facilitated by CcmF and CcmH. This chain is Cytochrome c-type biogenesis protein CcmE, found in Yersinia enterocolitica serotype O:8 / biotype 1B (strain NCTC 13174 / 8081).